The sequence spans 200 residues: dITP/XTP pyrophosphatase (200 aa).

7-12 (TQNKRK) contacts substrate. The Mg(2+) site is built by Glu-42 and Asp-71. Catalysis depends on Asp-71, which acts as the Proton acceptor. Residues Ser-72, 156–159 (FGYD), Lys-179, and 184–185 (HR) each bind substrate.

This sequence belongs to the HAM1 NTPase family. As to quaternary structure, homodimer. The cofactor is Mg(2+).

It carries out the reaction XTP + H2O = XMP + diphosphate + H(+). The enzyme catalyses dITP + H2O = dIMP + diphosphate + H(+). The catalysed reaction is ITP + H2O = IMP + diphosphate + H(+). In terms of biological role, pyrophosphatase that catalyzes the hydrolysis of nucleoside triphosphates to their monophosphate derivatives, with a high preference for the non-canonical purine nucleotides XTP (xanthosine triphosphate), dITP (deoxyinosine triphosphate) and ITP. Seems to function as a house-cleaning enzyme that removes non-canonical purine nucleotides from the nucleotide pool, thus preventing their incorporation into DNA/RNA and avoiding chromosomal lesions. The protein is dITP/XTP pyrophosphatase of Malacoplasma penetrans (strain HF-2) (Mycoplasma penetrans).